Reading from the N-terminus, the 453-residue chain is MERTCLAVILAAGDSTRMKSSKSKVLHPVAGRPMIAHVVEAVASAGISSVALVVGRDAEEVAKAASIAGVGIEACLQKERLGTGHAVLAAREAIAKGYDDILVTYGDVPLQTDGPLKAARQGLADGSDIVVIGFHTDRPTGYGRLLVKDGELIAIREEKDATDAERTVTWCNSGLMAINGRKALDLLQRIGNANAKGEFYLTDLVEIARSLGGRVTAVDAPEIEMTGCNTRAELAVIERFWQERRRHQLMLSGVTMIAPETVFLSYDTVIGQDALIEPNVVFGPGAVIDSGAVIHAFSHIEGAHVSQGATVGPFARLRPGADLGNGSKVGNFCEVKNGRIGEGAKVNHLTYIGDAVIGAGSNIGAGTITCNYDGVNKSETVIGENAFIGSNSSLVAPVTIGDGAYIASGSVITADVPADALALGRARQEIKPGRASLLRERALATKAAKKAKG.

Residues 1–231 are pyrophosphorylase; the sequence is MERTCLAVIL…EIEMTGCNTR (231 aa). UDP-N-acetyl-alpha-D-glucosamine-binding positions include 10–13, Lys-24, Gln-77, 82–83, 105–107, Gly-143, Glu-157, Asn-172, and Asn-229; these read LAAG, GT, and YGD. Asp-107 serves as a coordination point for Mg(2+). Mg(2+) is bound at residue Asn-229. Residues 232-252 form a linker region; sequence AELAVIERFWQERRRHQLMLS. Residues 253-453 form an N-acetyltransferase region; that stretch reads GVTMIAPETV…ATKAAKKAKG (201 aa). Residues Arg-318 and Lys-336 each coordinate UDP-N-acetyl-alpha-D-glucosamine. Residue His-348 is the Proton acceptor of the active site. UDP-N-acetyl-alpha-D-glucosamine is bound by residues Tyr-351 and Asn-362. Acetyl-CoA is bound by residues Ala-365, 371–372, Ser-390, Ser-408, and Arg-425; that span reads NY.

The protein in the N-terminal section; belongs to the N-acetylglucosamine-1-phosphate uridyltransferase family. In the C-terminal section; belongs to the transferase hexapeptide repeat family. In terms of assembly, homotrimer. It depends on Mg(2+) as a cofactor.

Its subcellular location is the cytoplasm. It carries out the reaction alpha-D-glucosamine 1-phosphate + acetyl-CoA = N-acetyl-alpha-D-glucosamine 1-phosphate + CoA + H(+). The catalysed reaction is N-acetyl-alpha-D-glucosamine 1-phosphate + UTP + H(+) = UDP-N-acetyl-alpha-D-glucosamine + diphosphate. It functions in the pathway nucleotide-sugar biosynthesis; UDP-N-acetyl-alpha-D-glucosamine biosynthesis; N-acetyl-alpha-D-glucosamine 1-phosphate from alpha-D-glucosamine 6-phosphate (route II): step 2/2. It participates in nucleotide-sugar biosynthesis; UDP-N-acetyl-alpha-D-glucosamine biosynthesis; UDP-N-acetyl-alpha-D-glucosamine from N-acetyl-alpha-D-glucosamine 1-phosphate: step 1/1. Its pathway is bacterial outer membrane biogenesis; LPS lipid A biosynthesis. Catalyzes the last two sequential reactions in the de novo biosynthetic pathway for UDP-N-acetylglucosamine (UDP-GlcNAc). The C-terminal domain catalyzes the transfer of acetyl group from acetyl coenzyme A to glucosamine-1-phosphate (GlcN-1-P) to produce N-acetylglucosamine-1-phosphate (GlcNAc-1-P), which is converted into UDP-GlcNAc by the transfer of uridine 5-monophosphate (from uridine 5-triphosphate), a reaction catalyzed by the N-terminal domain. This chain is Bifunctional protein GlmU, found in Rhizobium leguminosarum bv. trifolii (strain WSM2304).